Here is a 470-residue protein sequence, read N- to C-terminus: UDP-N-acetylmuramate--L-alanine ligase (470 aa).

An ATP-binding site is contributed by 118–124; that stretch reads GTHGKTT.

Belongs to the MurCDEF family.

The protein resides in the cytoplasm. It carries out the reaction UDP-N-acetyl-alpha-D-muramate + L-alanine + ATP = UDP-N-acetyl-alpha-D-muramoyl-L-alanine + ADP + phosphate + H(+). The protein operates within cell wall biogenesis; peptidoglycan biosynthesis. Cell wall formation. The sequence is that of UDP-N-acetylmuramate--L-alanine ligase from Cereibacter sphaeroides (strain ATCC 17025 / ATH 2.4.3) (Rhodobacter sphaeroides).